A 353-amino-acid chain; its full sequence is Putative 3-oxoacyl-[acyl-carrier-protein] synthase 3 (353 aa).

Catalysis depends on residues Cys-122, His-268, and Asn-299.

It belongs to the thiolase-like superfamily. FabH family. In terms of assembly, homodimer.

It localises to the cytoplasm. It catalyses the reaction malonyl-[ACP] + acetyl-CoA + H(+) = 3-oxobutanoyl-[ACP] + CO2 + CoA. Its pathway is lipid metabolism; fatty acid biosynthesis. May catalyze the condensation reaction of fatty acid synthesis by the addition to an acyl acceptor of two carbons from malonyl-ACP. The polypeptide is Putative 3-oxoacyl-[acyl-carrier-protein] synthase 3 (Campylobacter jejuni subsp. jejuni serotype O:2 (strain ATCC 700819 / NCTC 11168)).